A 916-amino-acid chain; its full sequence is Protein O-GlcNAcase (916 aa).

Positions 1 to 46 (MVQKESQAALEERESERNANPAAASGASLEQSVAPAPGEDNPSGAG) are disordered. The GH84 domain maps to 60 to 336 (FLCGVVEGFY…TLATWYKSNM (277 aa)). Positions 67, 98, and 174 each coordinate a protein. The active-site Proton donor is D175. A protein-binding positions include Y219, 278 to 280 (WDN), D285, and N313. A Phosphoserine modification is found at S364. A disordered region spans residues 443–465 (ALSGEPSVLTKEEEKKQPDEEPM). The segment covering 452-461 (TKEEEKKQPD) has biased composition (basic and acidic residues).

This sequence belongs to the glycosyl hydrolase 84 family. Monomer. Interacts with CLOCK. In terms of processing, proteolytically cleaved by caspase-3 during apoptosis. The fragments interact with each other; cleavage does not decrease enzyme activity.

It localises to the cytoplasm. Its subcellular location is the nucleus. It carries out the reaction 3-O-(N-acetyl-beta-D-glucosaminyl)-L-seryl-[protein] + H2O = N-acetyl-D-glucosamine + L-seryl-[protein]. It catalyses the reaction 3-O-(N-acetyl-beta-D-glucosaminyl)-L-threonyl-[protein] + H2O = L-threonyl-[protein] + N-acetyl-D-glucosamine. Its function is as follows. Cleaves GlcNAc but not GalNAc from O-glycosylated proteins. Deglycosylates a large and diverse number of proteins, such as CRYAB, ELK1, GSDMD, LMNB1 and TAB1. Can use p-nitrophenyl-beta-GlcNAc and 4-methylumbelliferone-GlcNAc as substrates but not p-nitrophenyl-beta-GalNAc or p-nitrophenyl-alpha-GlcNAc (in vitro). Does not bind acetyl-CoA and does not have histone acetyltransferase activity. This chain is Protein O-GlcNAcase, found in Mus musculus (Mouse).